The chain runs to 396 residues: Initiation-specific alpha-1,6-mannosyltransferase (396 aa).

Topologically, residues 1-7 (MLRLRLR) are cytoplasmic. Residues 8 to 28 (SIVIGAAIAGSILLLFNHGSI) form a helical; Signal-anchor for type II membrane protein membrane-spanning segment. Topologically, residues 29–396 (EGMEDLTEIS…HFFAGSWKDD (368 aa)) are lumenal. Positions 229-231 (DID) match the DXD motif motif. Asparagine 345 is a glycosylation site (N-linked (GlcNAc...) asparagine).

The protein belongs to the glycosyltransferase 32 family. Mn(2+) serves as cofactor.

It localises to the endoplasmic reticulum membrane. It is found in the golgi apparatus membrane. The enzyme catalyses Transfers an alpha-D-mannosyl residue from GDP-mannose into lipid-linked oligosaccharide, forming an alpha-(1-&gt;6)-D-mannosyl-D-mannose linkage.. Mannosyltransferase involved in outer chain elongation of asparagine-linked oligosaccharides of the type Man(9)GlcNAc(2). May otherwise add the first alpha-1,6-mannose to the Man(8)GlcNAc(2) core oligosaccharide from the ER. Represents the first enzymatic event required for synthesis of outer chain mannose linkages on yeast secretory proteins. The polypeptide is Initiation-specific alpha-1,6-mannosyltransferase (Schizosaccharomyces pombe (strain 972 / ATCC 24843) (Fission yeast)).